Reading from the N-terminus, the 102-residue chain is uncharacterized protein (102 aa).

The helical transmembrane segment at 5-27 (IYRSNLVIVITLFVSLSYYHTCF) threads the bilayer.

It localises to the host membrane. This is an uncharacterized protein from Microplitis demolitor (Parasitoid wasp).